A 147-amino-acid chain; its full sequence is MFSVKWGELYFNVVMEGGKAVKSYFSTYPSFSSSDSEYARQLERYFSGERVEVRIPYRLKASSFTRRVLEEVSRIPYGMVRMYSDIAKALNTSPRAVGQAVKRNPLPVIIPCHRVVGKKEIGGYTVSCSDIDGKSLKKRLLRLEGVF.

The active-site Nucleophile; methyl group acceptor is the C112.

It belongs to the MGMT family.

It localises to the cytoplasm. It catalyses the reaction a 6-O-methyl-2'-deoxyguanosine in DNA + L-cysteinyl-[protein] = S-methyl-L-cysteinyl-[protein] + a 2'-deoxyguanosine in DNA. The catalysed reaction is a 4-O-methyl-thymidine in DNA + L-cysteinyl-[protein] = a thymidine in DNA + S-methyl-L-cysteinyl-[protein]. Its function is as follows. Involved in the cellular defense against the biological effects of O6-methylguanine (O6-MeG) and O4-methylthymine (O4-MeT) in DNA. Repairs the methylated nucleobase in DNA by stoichiometrically transferring the methyl group to a cysteine residue in the enzyme. This is a suicide reaction: the enzyme is irreversibly inactivated. The protein is Methylated-DNA--protein-cysteine methyltransferase of Archaeoglobus fulgidus (strain ATCC 49558 / DSM 4304 / JCM 9628 / NBRC 100126 / VC-16).